A 546-amino-acid chain; its full sequence is Chaperonin GroEL 1 (546 aa).

ATP is bound by residues 29–32, 86–90, G414, and D499; these read TLGP and DGTTT.

The protein belongs to the chaperonin (HSP60) family. As to quaternary structure, forms a cylinder of 14 subunits composed of two heptameric rings stacked back-to-back. Interacts with the co-chaperonin GroES.

Its subcellular location is the cytoplasm. The enzyme catalyses ATP + H2O + a folded polypeptide = ADP + phosphate + an unfolded polypeptide.. In terms of biological role, together with its co-chaperonin GroES, plays an essential role in assisting protein folding. The GroEL-GroES system forms a nano-cage that allows encapsulation of the non-native substrate proteins and provides a physical environment optimized to promote and accelerate protein folding. The protein is Chaperonin GroEL 1 of Roseiflexus sp. (strain RS-1).